A 145-amino-acid polypeptide reads, in one-letter code: D-aminoacyl-tRNA deacylase (145 aa).

The short motif at 137–138 is the Gly-cisPro motif, important for rejection of L-amino acids element; that stretch reads GP.

Belongs to the DTD family. As to quaternary structure, homodimer.

The protein resides in the cytoplasm. The catalysed reaction is glycyl-tRNA(Ala) + H2O = tRNA(Ala) + glycine + H(+). It catalyses the reaction a D-aminoacyl-tRNA + H2O = a tRNA + a D-alpha-amino acid + H(+). An aminoacyl-tRNA editing enzyme that deacylates mischarged D-aminoacyl-tRNAs. Also deacylates mischarged glycyl-tRNA(Ala), protecting cells against glycine mischarging by AlaRS. Acts via tRNA-based rather than protein-based catalysis; rejects L-amino acids rather than detecting D-amino acids in the active site. By recycling D-aminoacyl-tRNA to D-amino acids and free tRNA molecules, this enzyme counteracts the toxicity associated with the formation of D-aminoacyl-tRNA entities in vivo and helps enforce protein L-homochirality. This Limosilactobacillus reuteri (strain DSM 20016) (Lactobacillus reuteri) protein is D-aminoacyl-tRNA deacylase.